The sequence spans 449 residues: UDP-N-acetylmuramate--L-alanine ligase (449 aa).

118-124 (GTHGKTT) lines the ATP pocket.

It belongs to the MurCDEF family.

The protein localises to the cytoplasm. It catalyses the reaction UDP-N-acetyl-alpha-D-muramate + L-alanine + ATP = UDP-N-acetyl-alpha-D-muramoyl-L-alanine + ADP + phosphate + H(+). Its pathway is cell wall biogenesis; peptidoglycan biosynthesis. Cell wall formation. This chain is UDP-N-acetylmuramate--L-alanine ligase, found in Flavobacterium johnsoniae (strain ATCC 17061 / DSM 2064 / JCM 8514 / BCRC 14874 / CCUG 350202 / NBRC 14942 / NCIMB 11054 / UW101) (Cytophaga johnsonae).